The following is a 517-amino-acid chain: Acyltransferase AFT15-1 (517 aa).

The active-site Proton acceptor is the His-180.

It belongs to the plant acyltransferase family.

It functions in the pathway mycotoxin biosynthesis. Functionally, acyltransferase; part of the gene clusters that mediate the biosynthesis of the host-selective toxins (HSTs) AF-toxins responsible for Alternaria black spot of strawberry disease by the strawberry pathotype. AF-toxin I and III are valine derivatives of 2,3-dyhydroxy-isovaleric acid and 2-hydroxy-isovaleric acid respectively, while AF II is an isoleucine derivative of 2-hydroxy-valeric acid. These derivatives are bound to a 9,10-epoxy-8-hydroxy-9-methyl-decatrienoic acid (EDA) moiety. On cellular level, AF-toxins affect plasma membrane of susceptible cells and cause a sudden increase in loss of K(+) after a few minutes of toxin treatment. The aldo-keto reductase AFTS1 catalyzes the conversion of 2-keto-isovaleric acid (2-KIV) to 2-hydroxy-isovaleric acid (2-HIV) by reduction of its ketone to an alcohol. The acyl-CoA ligase AFT1, the hydrolase AFT2 and the enoyl-CoA hydratases AFT3 and AFT6, but also the polyketide synthase AFT9, the acyl-CoA dehydrogenase AFT10, the cytochrome P450 monooxygenase AFT11 and the oxidoreductase AFT12 are all involved in the biosynthesis of the AK-, AF- and ACT-toxin common EDA structural moiety. The exact function of each enzyme, and of additional enzymes identified within the AF-toxin clusters have still to be determined. This chain is Acyltransferase AFT15-1 (AFT15-1), found in Alternaria alternata (Alternaria rot fungus).